Reading from the N-terminus, the 291-residue chain is 4-diphosphocytidyl-2-C-methyl-D-erythritol kinase (291 aa).

The active site involves Lys-11. ATP is bound at residue 97-107 (PVAAGIGGGSS). Asp-139 is a catalytic residue.

It belongs to the GHMP kinase family. IspE subfamily.

It carries out the reaction 4-CDP-2-C-methyl-D-erythritol + ATP = 4-CDP-2-C-methyl-D-erythritol 2-phosphate + ADP + H(+). It participates in isoprenoid biosynthesis; isopentenyl diphosphate biosynthesis via DXP pathway; isopentenyl diphosphate from 1-deoxy-D-xylulose 5-phosphate: step 3/6. Catalyzes the phosphorylation of the position 2 hydroxy group of 4-diphosphocytidyl-2C-methyl-D-erythritol. This Methylorubrum extorquens (strain PA1) (Methylobacterium extorquens) protein is 4-diphosphocytidyl-2-C-methyl-D-erythritol kinase.